A 155-amino-acid chain; its full sequence is SsrA-binding protein (155 aa).

The protein belongs to the SmpB family.

The protein resides in the cytoplasm. Functionally, required for rescue of stalled ribosomes mediated by trans-translation. Binds to transfer-messenger RNA (tmRNA), required for stable association of tmRNA with ribosomes. tmRNA and SmpB together mimic tRNA shape, replacing the anticodon stem-loop with SmpB. tmRNA is encoded by the ssrA gene; the 2 termini fold to resemble tRNA(Ala) and it encodes a 'tag peptide', a short internal open reading frame. During trans-translation Ala-aminoacylated tmRNA acts like a tRNA, entering the A-site of stalled ribosomes, displacing the stalled mRNA. The ribosome then switches to translate the ORF on the tmRNA; the nascent peptide is terminated with the 'tag peptide' encoded by the tmRNA and targeted for degradation. The ribosome is freed to recommence translation, which seems to be the essential function of trans-translation. In Geobacillus thermodenitrificans (strain NG80-2), this protein is SsrA-binding protein.